The chain runs to 522 residues: Putative ribose/galactose/methyl galactoside import ATP-binding protein (522 aa).

2 consecutive ABC transporter domains span residues 7 to 244 and 254 to 498; these read LEMV…VGRE and PKLG…TGQA. Position 39-46 (39-46) interacts with ATP; the sequence is GENGAGKS.

This sequence belongs to the ABC transporter superfamily. Carbohydrate importer 2 (CUT2) (TC 3.A.1.2) family.

The protein resides in the cell membrane. The catalysed reaction is D-ribose(out) + ATP + H2O = D-ribose(in) + ADP + phosphate + H(+). It catalyses the reaction D-galactose(out) + ATP + H2O = D-galactose(in) + ADP + phosphate + H(+). In terms of biological role, part of an ABC transporter complex involved in carbohydrate import. Could be involved in ribose, galactose and/or methyl galactoside import. Responsible for energy coupling to the transport system. This Halalkalibacterium halodurans (strain ATCC BAA-125 / DSM 18197 / FERM 7344 / JCM 9153 / C-125) (Bacillus halodurans) protein is Putative ribose/galactose/methyl galactoside import ATP-binding protein.